Reading from the N-terminus, the 313-residue chain is tRNA-cytidine(32) 2-sulfurtransferase (313 aa).

The PP-loop motif motif lies at 54–59; the sequence is SGGKDS. Cys129, Cys132, and Cys220 together coordinate [4Fe-4S] cluster.

It belongs to the TtcA family. As to quaternary structure, homodimer. Mg(2+) is required as a cofactor. Requires [4Fe-4S] cluster as cofactor.

It localises to the cytoplasm. It carries out the reaction cytidine(32) in tRNA + S-sulfanyl-L-cysteinyl-[cysteine desulfurase] + AH2 + ATP = 2-thiocytidine(32) in tRNA + L-cysteinyl-[cysteine desulfurase] + A + AMP + diphosphate + H(+). The protein operates within tRNA modification. In terms of biological role, catalyzes the ATP-dependent 2-thiolation of cytidine in position 32 of tRNA, to form 2-thiocytidine (s(2)C32). The sulfur atoms are provided by the cysteine/cysteine desulfurase (IscS) system. This is tRNA-cytidine(32) 2-sulfurtransferase from Methylibium petroleiphilum (strain ATCC BAA-1232 / LMG 22953 / PM1).